Reading from the N-terminus, the 384-residue chain is Bifunctional enzyme IspD/IspF (384 aa).

Residues 1–226 are 2-C-methyl-D-erythritol 4-phosphate cytidylyltransferase; the sequence is MAKTVVLVVA…RCLFDGPGEV (226 aa). The segment at 227 to 384 is 2-C-methyl-D-erythritol 2,4-cyclodiphosphate synthase; that stretch reads RSASGYDVHR…QAMASVWLPR (158 aa). Asp233 and His235 together coordinate a divalent metal cation. 4-CDP-2-C-methyl-D-erythritol 2-phosphate-binding positions include 233–235 and 260–261; these read DVH and HS. A divalent metal cation is bound at residue His268. 4-CDP-2-C-methyl-D-erythritol 2-phosphate is bound by residues 282–284, 358–361, Phe365, and Arg368; these read DIG and TTTE.

It in the N-terminal section; belongs to the IspD/TarI cytidylyltransferase family. IspD subfamily. This sequence in the C-terminal section; belongs to the IspF family. The cofactor is a divalent metal cation.

It catalyses the reaction 2-C-methyl-D-erythritol 4-phosphate + CTP + H(+) = 4-CDP-2-C-methyl-D-erythritol + diphosphate. The catalysed reaction is 4-CDP-2-C-methyl-D-erythritol 2-phosphate = 2-C-methyl-D-erythritol 2,4-cyclic diphosphate + CMP. It participates in isoprenoid biosynthesis; isopentenyl diphosphate biosynthesis via DXP pathway; isopentenyl diphosphate from 1-deoxy-D-xylulose 5-phosphate: step 2/6. Its pathway is isoprenoid biosynthesis; isopentenyl diphosphate biosynthesis via DXP pathway; isopentenyl diphosphate from 1-deoxy-D-xylulose 5-phosphate: step 4/6. Bifunctional enzyme that catalyzes the formation of 4-diphosphocytidyl-2-C-methyl-D-erythritol from CTP and 2-C-methyl-D-erythritol 4-phosphate (MEP) (IspD), and catalyzes the conversion of 4-diphosphocytidyl-2-C-methyl-D-erythritol 2-phosphate (CDP-ME2P) to 2-C-methyl-D-erythritol 2,4-cyclodiphosphate (ME-CPP) with a corresponding release of cytidine 5-monophosphate (CMP) (IspF). In Paramagnetospirillum magneticum (strain ATCC 700264 / AMB-1) (Magnetospirillum magneticum), this protein is Bifunctional enzyme IspD/IspF.